The sequence spans 286 residues: Protein NipSnap homolog 2 (286 aa).

Residues 1–23 (MAARVLRARGAAWAGGLLQRAAP) constitute a mitochondrion transit peptide.

The protein belongs to the NipSnap family. In terms of assembly, interacts with CALCOCO2/NDP52, NBR1, SQSTM1/p62, TAX1BP1 and WDFY3/ALFY. Interacts with ATG8 family proteins (MAP1LC3A, MAP1LC3B, MAP1LC3C, GABARAP, GABARAPL1 and GABARAPL2). Interacts with VDAC1. In terms of tissue distribution, widely expressed. Most abundant in heart and skeletal muscle.

It localises to the mitochondrion matrix. Functionally, protein involved in mitophagy by facilitating recruitment of the autophagy machinery required for clearance of damaged mitochondria. Accumulates on the mitochondria surface in response to mitochondrial depolarization and acts as a 'eat me' signal by recruiting proteins involved in selective autophagy, such as autophagy receptors (CALCOCO2/NDP52, NBR1, SQSTM1/p62, TAX1BP1 and WDFY3/ALFY) and ATG8 family proteins (MAP1LC3A, MAP1LC3B, MAP1LC3C, GABARAP, GABARAPL1 and GABARAPL2). This Homo sapiens (Human) protein is Protein NipSnap homolog 2.